The primary structure comprises 258 residues: Isoprenyl transferase 1 (258 aa).

Asp-39 is an active-site residue. Asp-39 serves as a coordination point for Mg(2+). Substrate contacts are provided by residues 40–43, Trp-44, Arg-52, His-57, and 85–87; these read GNRR and SND. The active-site Proton acceptor is the Asn-88. Substrate contacts are provided by residues Arg-92, Arg-207, and 213 to 215; that span reads RLS. Residue Glu-226 participates in Mg(2+) binding.

It belongs to the UPP synthase family. As to quaternary structure, homodimer. It depends on Mg(2+) as a cofactor.

Its function is as follows. Catalyzes the condensation of isopentenyl diphosphate (IPP) with allylic pyrophosphates generating different type of terpenoids. This Tropheryma whipplei (strain TW08/27) (Whipple's bacillus) protein is Isoprenyl transferase 1.